A 553-amino-acid chain; its full sequence is CDP-diacylglycerol--glycerol-3-phosphate 3-phosphatidyltransferase, mitochondrial (553 aa).

The N-terminal 25 residues, 1–25, are a transit peptide targeting the mitochondrion; sequence MAAPAAGPVFWRRLLGLLPGRPGLA. Ser-46 carries the phosphoserine modification. Position 121–128 (121–128) interacts with ATP; it reads ASLYLGTG. PLD phosphodiesterase domains are found at residues 212-238 and 457-490; these read TIGL…SDSY and RGWT…GYRS. Active-site residues include His-217, Lys-219, and Asp-224.

It belongs to the CDP-alcohol phosphatidyltransferase class-II family. In terms of tissue distribution, widely expressed with higher expression in testis, liver and brain.

It localises to the mitochondrion. The catalysed reaction is a CDP-1,2-diacyl-sn-glycerol + sn-glycerol 3-phosphate = a 1,2-diacyl-sn-glycero-3-phospho-(1'-sn-glycero-3'-phosphate) + CMP + H(+). It functions in the pathway phospholipid metabolism; phosphatidylglycerol biosynthesis; phosphatidylglycerol from CDP-diacylglycerol: step 1/2. Activated by calcium and magnesium and inhibited by other bivalent cations. Functionally, functions in the biosynthesis of the anionic phospholipids phosphatidylglycerol and cardiolipin. The sequence is that of CDP-diacylglycerol--glycerol-3-phosphate 3-phosphatidyltransferase, mitochondrial (Pgs1) from Mus musculus (Mouse).